Here is a 337-residue protein sequence, read N- to C-terminus: MSENAANNIMETKICTDAIVSELQKKKVHLFYCLECEELARNIAAESDHITLQSINWRSFADGFPNLFINNAHDIRGQHVAFLASFSSPAVIFEQISVIYLLPRLFVASFTLVLPFFPTGSFERMEEEGDVATAFTMARIVSNIPISRGGPTSVVIYDIHALQERFYFADQVLPLFETGIPLLTKRLQQLPETEKVIVAFPDDGAWKRFHKLLDHYPTVVCTKVREGDKRIVRLKEGNPAGCHVVIVDDLVQSGGTLIECQKVLAAHGAVKVSAYVTHGVFPKSSWERFTHKKNGLEEAFAYFWITDSCPQTVKAIGNKAPFEVLSLAGSIADALQI.

Serine 2 is subject to N-acetylserine. Mg(2+) contacts are provided by aspartate 158 and histidine 160. The binding of phosphoribosylpyrophosphate stretch occupies residues 241–256 (GCHVVIVDDLVQSGGT).

Belongs to the ribose-phosphate pyrophosphokinase family.

It catalyses the reaction D-ribose 5-phosphate + ATP = 5-phospho-alpha-D-ribose 1-diphosphate + AMP + H(+). The protein is Ribose-phosphate pyrophosphokinase 4 (PRS4) of Arabidopsis thaliana (Mouse-ear cress).